Here is a 132-residue protein sequence, read N- to C-terminus: Small ribosomal subunit protein uS8 (132 aa).

It belongs to the universal ribosomal protein uS8 family. Part of the 30S ribosomal subunit. Contacts proteins S5 and S12.

Functionally, one of the primary rRNA binding proteins, it binds directly to 16S rRNA central domain where it helps coordinate assembly of the platform of the 30S subunit. This Bradyrhizobium sp. (strain ORS 278) protein is Small ribosomal subunit protein uS8.